The chain runs to 680 residues: tRNA 5-methylaminomethyl-2-thiouridine biosynthesis bifunctional protein MnmC (680 aa).

Residues 1–267 (MTAEPNKPCQ…MAAILSSDAP (267 aa)) are tRNA (mnm(5)s(2)U34)-methyltransferase. An FAD-dependent cmnm(5)s(2)U34 oxidoreductase region spans residues 273–680 (IGGGLASAHL…LRKLLKGKSL (408 aa)).

It in the N-terminal section; belongs to the methyltransferase superfamily. tRNA (mnm(5)s(2)U34)-methyltransferase family. The protein in the C-terminal section; belongs to the DAO family. Requires FAD as cofactor.

Its subcellular location is the cytoplasm. The enzyme catalyses 5-aminomethyl-2-thiouridine(34) in tRNA + S-adenosyl-L-methionine = 5-methylaminomethyl-2-thiouridine(34) in tRNA + S-adenosyl-L-homocysteine + H(+). Its function is as follows. Catalyzes the last two steps in the biosynthesis of 5-methylaminomethyl-2-thiouridine (mnm(5)s(2)U) at the wobble position (U34) in tRNA. Catalyzes the FAD-dependent demodification of cmnm(5)s(2)U34 to nm(5)s(2)U34, followed by the transfer of a methyl group from S-adenosyl-L-methionine to nm(5)s(2)U34, to form mnm(5)s(2)U34. This is tRNA 5-methylaminomethyl-2-thiouridine biosynthesis bifunctional protein MnmC from Shewanella sp. (strain W3-18-1).